Here is a 170-residue protein sequence, read N- to C-terminus: CASP-like protein 1F1 (170 aa).

The Cytoplasmic portion of the chain corresponds to 1–16 (MMGDNEGRRTPLLNLG). Residues 17–37 (VQVSMRVLIIGAAMASMWVMI) traverse the membrane as a helical segment. The Extracellular segment spans residues 38-62 (TNREVASVYGIAFEAKYSYSSAFRY). The helical transmembrane segment at 63 to 83 (LVYAQIAVCAATLFTLVWACL) threads the bilayer. Residues 84–88 (AVRRR) are Cytoplasmic-facing. Residues 89 to 109 (GLVFALFFFDLLTTLTAISAF) form a helical membrane-spanning segment. Over 110–141 (SAAFAEGYVGKYGNKQAGWLPICGYVHVYCSR) the chain is Extracellular. A helical transmembrane segment spans residues 142–162 (VTISLAMSFASFVLLFILTVL). Topologically, residues 163 to 170 (TASSARHY) are cytoplasmic.

The protein belongs to the Casparian strip membrane proteins (CASP) family. Homodimer and heterodimers.

The protein resides in the cell membrane. This is CASP-like protein 1F1 from Arabidopsis lyrata subsp. lyrata (Lyre-leaved rock-cress).